The sequence spans 318 residues: MVKRQFDYEQKVQEIREKLEELNNLSSNMEFDLSQEIESLEEKIENNRERRYKNLSPWEKVLLSRHPERPNSNDYIRYFCEEWIELHGDRHFGDDSSVIGGIGRFNGQAVTILGYRKGKDTRENLQYNFGMPHPEGYRKIQRLLLQAEKFQRPVITLIDTPGAYPGIGAEERGQAWAISQVLMTLSALEVPVIAVVSGEGGSGGALALAVADRLLMLSNAVFSVASPEACASILWKELERVEDMARAMKITANDLQRLGIVDEIIEEPLGGAHLNFPEMAEKLKKALQKHLGEILSQDSGELLEERFQKLRKIGEFRG.

A CoA carboxyltransferase C-terminal domain is found at 32–293; that stretch reads DLSQEIESLE…KKALQKHLGE (262 aa).

The protein belongs to the AccA family. In terms of assembly, acetyl-CoA carboxylase is a heterohexamer composed of biotin carboxyl carrier protein (AccB), biotin carboxylase (AccC) and two subunits each of ACCase subunit alpha (AccA) and ACCase subunit beta (AccD).

It localises to the cytoplasm. It catalyses the reaction N(6)-carboxybiotinyl-L-lysyl-[protein] + acetyl-CoA = N(6)-biotinyl-L-lysyl-[protein] + malonyl-CoA. It functions in the pathway lipid metabolism; malonyl-CoA biosynthesis; malonyl-CoA from acetyl-CoA: step 1/1. In terms of biological role, component of the acetyl coenzyme A carboxylase (ACC) complex. First, biotin carboxylase catalyzes the carboxylation of biotin on its carrier protein (BCCP) and then the CO(2) group is transferred by the carboxyltransferase to acetyl-CoA to form malonyl-CoA. This chain is Acetyl-coenzyme A carboxylase carboxyl transferase subunit alpha, found in Syntrophomonas wolfei subsp. wolfei (strain DSM 2245B / Goettingen).